The sequence spans 401 residues: Elongation factor Tu 1 (401 aa).

Residues 10-209 (KPHVNVGTIG…AVDEYIPTPV (200 aa)) form the tr-type G domain. The tract at residues 19 to 26 (GHVDHGKT) is G1. Position 19–26 (19–26 (GHVDHGKT)) interacts with GTP. Mg(2+) is bound at residue threonine 26. A G2 region spans residues 60-64 (GITIA). Residues 81–84 (DCPG) form a G3 region. GTP-binding positions include 81-85 (DCPGH) and 136-139 (NKVD). The G4 stretch occupies residues 136–139 (NKVD). A G5 region spans residues 174–176 (SAL).

The protein belongs to the TRAFAC class translation factor GTPase superfamily. Classic translation factor GTPase family. EF-Tu/EF-1A subfamily. As to quaternary structure, monomer.

The protein resides in the cytoplasm. It catalyses the reaction GTP + H2O = GDP + phosphate + H(+). Functionally, GTP hydrolase that promotes the GTP-dependent binding of aminoacyl-tRNA to the A-site of ribosomes during protein biosynthesis. This is Elongation factor Tu 1 from Roseiflexus castenholzii (strain DSM 13941 / HLO8).